A 290-amino-acid polypeptide reads, in one-letter code: Glutaredoxin domain-containing cysteine-rich protein 1 (290 aa).

The Glutaredoxin domain maps to 127 to 234 (LQQPSADLEF…DLLTKIERVQ (108 aa)).

The protein belongs to the GRXCR1 family. In terms of tissue distribution, in the inner ear, expressed predominantly in sensory hair cells and their stereocilia bundles with higher levels in outer hair cells (OHC) at P1 and in inner hair cells (IHC) at P5. At P1, expression is prominent in each row of stereocilia within bundles including immature shorter stereocilia. Expression is also observed in apical microvilli of sensory cells at P1 and in kinocilia at P1 and P5. In the adult, expression is localized throughout the length of the stereocilia of both OHC and IHC (at protein level).

It is found in the cell projection. Its subcellular location is the stereocilium. The protein localises to the microvillus. It localises to the kinocilium. May play a role in actin filament architecture in developing stereocilia of sensory cells. The chain is Glutaredoxin domain-containing cysteine-rich protein 1 (Grxcr1) from Mus musculus (Mouse).